The primary structure comprises 249 residues: 3alpha-hydroxy bile acid-CoA-ester 3-dehydrogenase 1/3 (249 aa).

Residues 15-18 (TRGI), Glu38, Glu42, and Asn92 each bind NAD(+). Residue Ser144 coordinates substrate. Catalysis depends on proton donor/acceptor residues Tyr157 and Lys161. NAD(+) contacts are provided by residues Lys161 and 190–192 (VDT).

This sequence belongs to the short-chain dehydrogenases/reductases (SDR) family. As to quaternary structure, homotetramer.

The enzyme catalyses a 3alpha-hydroxy bile acid CoA + NAD(+) = a 3-oxo bile acid CoA + NADH + H(+). The catalysed reaction is choloyl-CoA + NAD(+) = 7alpha,12alpha-dihydroxy-3-oxochol-24-oyl-CoA + NADH + H(+). It carries out the reaction chenodeoxycholoyl-CoA + NAD(+) = 7alpha-hydroxy-3-oxochol-24-oyl-CoA + NADH + H(+). It catalyses the reaction deoxycholoyl-CoA + NAD(+) = 12alpha-hydroxy-3-oxocholan-24-oyl-CoA + NADH + H(+). The enzyme catalyses lithocholoyl-CoA + NAD(+) = 3-oxocholan-24-oyl-CoA + NADH + H(+). It participates in lipid metabolism; bile acid biosynthesis. Functionally, involved in the multi-step bile acid 7alpha-dehydroxylation pathway that transforms primary bile acids to secondary bile acids in the human gut. Catalyzes the oxidation of C3-hydroxyl group of CoA conjugated bile acids generating a C3-oxo bile acid intermediate. Can use choloyl-CoA, chenodeoxycholoyl-CoA, deoxycholoyl-CoA, and lithocholoyl-CoA as substrates with similar efficiency. Highly prefers NAD over NADP as cosubstrate. Also catalyzes the reverse reactions; in vitro, the preferred direction of reaction depends on the pH. Has very little activity with unconjugated (non-CoA) bile acid substrates. The chain is 3alpha-hydroxy bile acid-CoA-ester 3-dehydrogenase 1/3 (baiA1) from Clostridium scindens (strain JCM 10418 / VPI 12708).